A 402-amino-acid polypeptide reads, in one-letter code: CCA-adding enzyme (402 aa).

Positions 32 and 35 each coordinate ATP. CTP-binding residues include G32 and R35. Residues D45 and D47 each contribute to the Mg(2+) site. ATP is bound by residues R116, D159, R162, R165, and R168. 5 residues coordinate CTP: R116, D159, R162, R165, and R168.

Belongs to the tRNA nucleotidyltransferase/poly(A) polymerase family. Bacterial CCA-adding enzyme type 3 subfamily. As to quaternary structure, homodimer. It depends on Mg(2+) as a cofactor.

It carries out the reaction a tRNA precursor + 2 CTP + ATP = a tRNA with a 3' CCA end + 3 diphosphate. The catalysed reaction is a tRNA with a 3' CCA end + 2 CTP + ATP = a tRNA with a 3' CCACCA end + 3 diphosphate. Catalyzes the addition and repair of the essential 3'-terminal CCA sequence in tRNAs without using a nucleic acid template. Adds these three nucleotides in the order of C, C, and A to the tRNA nucleotide-73, using CTP and ATP as substrates and producing inorganic pyrophosphate. tRNA 3'-terminal CCA addition is required both for tRNA processing and repair. Also involved in tRNA surveillance by mediating tandem CCA addition to generate a CCACCA at the 3' terminus of unstable tRNAs. While stable tRNAs receive only 3'-terminal CCA, unstable tRNAs are marked with CCACCA and rapidly degraded. The sequence is that of CCA-adding enzyme from Streptococcus thermophilus (strain CNRZ 1066).